We begin with the raw amino-acid sequence, 506 residues long: Cationic amino acid transporter 8 (506 aa).

Asparagine 2 and asparagine 5 each carry an N-linked (GlcNAc...) asparagine glycan. The chain crosses the membrane as a helical span at residues 38-58 (FYLLLIIIIYTATSACIYFDW). Asparagine 75 carries an N-linked (GlcNAc...) asparagine glycan. Helical transmembrane passes span 93 to 113 (NLYP…GFLY), 116 to 136 (IGPK…WIFL), 147 to 167 (LIGF…ILTV), 174 to 194 (ISTF…AVPA), and 211 to 231 (ICYG…TFLL). A glycan (N-linked (GlcNAc...) asparagine) is linked at asparagine 277. The helical transmembrane segment at 302–322 (ILLFFKVLLSYPSICIIVYFI) threads the bilayer. 2 N-linked (GlcNAc...) asparagine glycosylation sites follow: asparagine 325 and asparagine 342. Transmembrane regions (helical) follow at residues 344-364 (SIIN…IIFG), 372-392 (AAII…TALI), 399-419 (LISA…IYCF), and 427-447 (VVFG…SLFC). Residues asparagine 453 and asparagine 456 are each glycosylated (N-linked (GlcNAc...) asparagine). A helical membrane pass occupies residues 466–486 (TISILLAISFIIMFLPLSILY).

This sequence belongs to the SLC43A transporter (TC 2.A.1.44) family.

The protein localises to the cell membrane. Its function is as follows. Cationic amino acid transporter which transports L-arginine, L-lysine and, to a lesser extent, L-histidine and ornithine. Plays an essential role in gametogenesis. The sequence is that of Cationic amino acid transporter 8 from Plasmodium berghei (strain Anka).